Reading from the N-terminus, the 73-residue chain is MAIYRRKASPIKIGDAIDYKDVELLSNFLTEQGKILPKRLTGLTNKQQNKVTKAIKRARMLSLLPFVNREGSL.

The protein belongs to the bacterial ribosomal protein bS18 family. In terms of assembly, part of the 30S ribosomal subunit.

It localises to the plastid. The protein localises to the chloroplast. The sequence is that of Small ribosomal subunit protein bS18c from Rhodomonas salina (Cryptomonas salina).